Here is a 77-residue protein sequence, read N- to C-terminus: U8-lycotoxin-Ls1q (77 aa).

An N-terminal signal peptide occupies residues 1–20 (MKLMIFAGLVLFAIVSLIEA). A propeptide spanning residues 21 to 26 (QAEHEK) is cleaved from the precursor.

This sequence belongs to the neurotoxin 19 (CSTX) family. 08 (U8-Lctx) subfamily. Contains 4 disulfide bonds. In terms of tissue distribution, expressed by the venom gland.

The protein localises to the secreted. The protein is U8-lycotoxin-Ls1q of Lycosa singoriensis (Wolf spider).